Here is a 225-residue protein sequence, read N- to C-terminus: Thymidylate kinase (225 aa).

Residue 12–19 participates in ATP binding; sequence GGEGAGKS.

It belongs to the thymidylate kinase family.

The enzyme catalyses dTMP + ATP = dTDP + ADP. Its function is as follows. Phosphorylation of dTMP to form dTDP in both de novo and salvage pathways of dTTP synthesis. The protein is Thymidylate kinase of Chelativorans sp. (strain BNC1).